The sequence spans 365 residues: tRNA/tmRNA (uracil-C(5))-methyltransferase (365 aa).

S-adenosyl-L-methionine is bound by residues Gln-189, Tyr-217, Asn-222, Glu-238, and Asp-298. Catalysis depends on Cys-323, which acts as the Nucleophile. The active-site Proton acceptor is the Glu-357.

The protein belongs to the class I-like SAM-binding methyltransferase superfamily. RNA M5U methyltransferase family. TrmA subfamily.

It carries out the reaction uridine(54) in tRNA + S-adenosyl-L-methionine = 5-methyluridine(54) in tRNA + S-adenosyl-L-homocysteine + H(+). The enzyme catalyses uridine(341) in tmRNA + S-adenosyl-L-methionine = 5-methyluridine(341) in tmRNA + S-adenosyl-L-homocysteine + H(+). Functionally, dual-specificity methyltransferase that catalyzes the formation of 5-methyluridine at position 54 (m5U54) in all tRNAs, and that of position 341 (m5U341) in tmRNA (transfer-mRNA). This Psychromonas ingrahamii (strain DSM 17664 / CCUG 51855 / 37) protein is tRNA/tmRNA (uracil-C(5))-methyltransferase.